The following is a 143-amino-acid chain: MNAKKRKGSAVERNIVGKLRDKGFAVVRAPASGSKRKDPIPDIIALKSGVIILIEMKSRKDKEGKIYVRREQAEGIMEFARKSGGTLFLGVKKPGVLKFIPFDKLRRTETGNYVADSEIEGLDLEDLVRLVEAKVSKTLDNFL.

Glu-12 lines the Mg(2+) pocket. Residue Ser-32 is part of the active site. Residues Asp-42 and Glu-55 each coordinate Mg(2+).

It belongs to the Holliday junction resolvase Hjc family. In terms of assembly, homodimer. The cofactor is Mg(2+).

It carries out the reaction Endonucleolytic cleavage at a junction such as a reciprocal single-stranded crossover between two homologous DNA duplexes (Holliday junction).. Functionally, a structure-specific endonuclease that resolves Holliday junction (HJ) intermediates during genetic recombination. Cleaves 4-way DNA junctions introducing paired nicks in opposing strands, leaving a 5'-terminal phosphate and a 3'-terminal hydroxyl group that are subsequently ligated to produce recombinant products. Its function is as follows. Hjc, Hjm (Hel308) and PINA coordinate HJ migration and cleavage of replication forks in a coordinated way. The protein is Crossover junction endodeoxyribonuclease Hjc of Saccharolobus islandicus (strain REY15A) (Sulfolobus islandicus).